The primary structure comprises 200 residues: MGLSPGSAKLGSPAQPLIAPAATGILDPRTGRPVGADDRFFVEVNNELSDKGFFVAATDDLITWARTGSLMWMTFGLACCAVEMMQMSMPRYDAERFGFAPRASPRQSDVMIVAGTLTNKMAPALRKVYDQMPEPRYVISMGSCANGGGYYHYSYAVVRGCDRIVPIDIYVPGCPPTAEALLYGVMLLQKKIRRIGTIER.

Cysteine 79, cysteine 80, cysteine 144, and cysteine 174 together coordinate [4Fe-4S] cluster.

The protein belongs to the complex I 20 kDa subunit family. In terms of assembly, NDH-1 is composed of 14 different subunits. Subunits NuoB, C, D, E, F, and G constitute the peripheral sector of the complex. The cofactor is [4Fe-4S] cluster.

It localises to the cell inner membrane. The catalysed reaction is a quinone + NADH + 5 H(+)(in) = a quinol + NAD(+) + 4 H(+)(out). Functionally, NDH-1 shuttles electrons from NADH, via FMN and iron-sulfur (Fe-S) centers, to quinones in the respiratory chain. The immediate electron acceptor for the enzyme in this species is believed to be ubiquinone. Couples the redox reaction to proton translocation (for every two electrons transferred, four hydrogen ions are translocated across the cytoplasmic membrane), and thus conserves the redox energy in a proton gradient. This Rhodopseudomonas palustris (strain BisA53) protein is NADH-quinone oxidoreductase subunit B 2.